A 444-amino-acid polypeptide reads, in one-letter code: tRNA modification GTPase MnmE (444 aa).

(6S)-5-formyl-5,6,7,8-tetrahydrofolate contacts are provided by R28, E86, and R126. Positions G224–A368 constitute a TrmE-type G domain. N234 is a K(+) binding site. GTP contacts are provided by residues N234–T239, S253–T259, and D278–G281. Residue S238 participates in Mg(2+) binding. Residues S253, I255, and T258 each contribute to the K(+) site. T259 is a Mg(2+) binding site. Position 444 (K444) interacts with (6S)-5-formyl-5,6,7,8-tetrahydrofolate.

It belongs to the TRAFAC class TrmE-Era-EngA-EngB-Septin-like GTPase superfamily. TrmE GTPase family. As to quaternary structure, homodimer. Heterotetramer of two MnmE and two MnmG subunits. Requires K(+) as cofactor.

The protein localises to the cytoplasm. Exhibits a very high intrinsic GTPase hydrolysis rate. Involved in the addition of a carboxymethylaminomethyl (cmnm) group at the wobble position (U34) of certain tRNAs, forming tRNA-cmnm(5)s(2)U34. In Methylorubrum populi (strain ATCC BAA-705 / NCIMB 13946 / BJ001) (Methylobacterium populi), this protein is tRNA modification GTPase MnmE.